We begin with the raw amino-acid sequence, 388 residues long: Chorismate synthase (388 aa).

NADP(+) contacts are provided by arginine 39 and arginine 45. FMN is bound by residues 130-132 (RSS), 251-252 (NA), glycine 296, 311-315 (KPIPT), and arginine 337.

The protein belongs to the chorismate synthase family. Homotetramer. The cofactor is FMNH2.

It catalyses the reaction 5-O-(1-carboxyvinyl)-3-phosphoshikimate = chorismate + phosphate. It functions in the pathway metabolic intermediate biosynthesis; chorismate biosynthesis; chorismate from D-erythrose 4-phosphate and phosphoenolpyruvate: step 7/7. Functionally, catalyzes the anti-1,4-elimination of the C-3 phosphate and the C-6 proR hydrogen from 5-enolpyruvylshikimate-3-phosphate (EPSP) to yield chorismate, which is the branch point compound that serves as the starting substrate for the three terminal pathways of aromatic amino acid biosynthesis. This reaction introduces a second double bond into the aromatic ring system. The polypeptide is Chorismate synthase (Streptococcus pyogenes serotype M28 (strain MGAS6180)).